Here is a 160-residue protein sequence, read N- to C-terminus: Cell division protein SepF (160 aa).

Positions Ala-18–Thr-30 are enriched in acidic residues. The disordered stretch occupies residues Ala-18 to Ile-72. Over residues Pro-45–Pro-57 the composition is skewed to low complexity.

This sequence belongs to the SepF family. As to quaternary structure, homodimer. Interacts with FtsZ.

The protein resides in the cytoplasm. Its function is as follows. Cell division protein that is part of the divisome complex and is recruited early to the Z-ring. Probably stimulates Z-ring formation, perhaps through the cross-linking of FtsZ protofilaments. Its function overlaps with FtsA. The protein is Cell division protein SepF of Bifidobacterium adolescentis (strain ATCC 15703 / DSM 20083 / NCTC 11814 / E194a).